The chain runs to 545 residues: CTP synthase (545 aa).

An amidoligase domain region spans residues Met1 to Leu265. Ser13 provides a ligand contact to CTP. Residue Ser13 participates in UTP binding. ATP-binding positions include Ser14 to Ile19 and Asp71. 2 residues coordinate Mg(2+): Asp71 and Glu139. CTP is bound by residues Asp146–Glu148, Lys186–Gln191, and Lys222. UTP is bound by residues Lys186 to Gln191 and Lys222. Positions Lys290 to Glu541 constitute a Glutamine amidotransferase type-1 domain. An L-glutamine-binding site is contributed by Gly351. Cys378 (nucleophile; for glutamine hydrolysis) is an active-site residue. L-glutamine is bound by residues Leu379–Gln382, Glu402, and Arg469. Active-site residues include His514 and Glu516.

The protein belongs to the CTP synthase family. Homotetramer.

The enzyme catalyses UTP + L-glutamine + ATP + H2O = CTP + L-glutamate + ADP + phosphate + 2 H(+). It carries out the reaction L-glutamine + H2O = L-glutamate + NH4(+). It catalyses the reaction UTP + NH4(+) + ATP = CTP + ADP + phosphate + 2 H(+). The protein operates within pyrimidine metabolism; CTP biosynthesis via de novo pathway; CTP from UDP: step 2/2. Allosterically activated by GTP, when glutamine is the substrate; GTP has no effect on the reaction when ammonia is the substrate. The allosteric effector GTP functions by stabilizing the protein conformation that binds the tetrahedral intermediate(s) formed during glutamine hydrolysis. Inhibited by the product CTP, via allosteric rather than competitive inhibition. In terms of biological role, catalyzes the ATP-dependent amination of UTP to CTP with either L-glutamine or ammonia as the source of nitrogen. Regulates intracellular CTP levels through interactions with the four ribonucleotide triphosphates. This Legionella pneumophila (strain Lens) protein is CTP synthase.